The sequence spans 57 residues: UPF0391 membrane protein AZOSEA39630 (57 aa).

Transmembrane regions (helical) follow at residues 4–24 and 37–57; these read WAII…TGVA and IALA…VLVF.

This sequence belongs to the UPF0391 family.

The protein resides in the cell membrane. In Aromatoleum aromaticum (strain DSM 19018 / LMG 30748 / EbN1) (Azoarcus sp. (strain EbN1)), this protein is UPF0391 membrane protein AZOSEA39630.